The sequence spans 590 residues: Probable metalloendopeptidase G1-type (590 aa).

H41 contributes to the Zn(2+) binding site. E44 is an active-site residue. H45 is a Zn(2+) binding site.

Belongs to the peptidase M44 family. Requires Zn(2+) as cofactor.

Functionally, seems to be involved in viral proteins maturation by cleavage at Ala-Gly-|-Xaa motifs. This is Probable metalloendopeptidase G1-type from Oryctolagus cuniculus (Rabbit).